Consider the following 267-residue polypeptide: Mediator of RNA polymerase II transcription subunit 8 (267 aa).

Coiled-coil stretches lie at residues 2 to 27 and 118 to 163; these read QQREEKQLEAFLESLVARVAHLKGSL and VEEQ…EDRD. Residues 156-165 are compositionally biased toward basic and acidic residues; sequence NNPREDRDSE. Disordered stretches follow at residues 156 to 180 and 227 to 267; these read NNPREDRDSETSALRQNKPSFNPAD and ASGH…PYNR. Polar residues predominate over residues 166-180; the sequence is TSALRQNKPSFNPAD. Residues 236 to 247 are compositionally biased toward low complexity; sequence GPVAPQQPGQPG.

Belongs to the Mediator complex subunit 8 family. Component of the Mediator complex. May be part of a multisubunit E3 ubiquitin-protein ligase complex.

The protein resides in the nucleus. The protein operates within protein modification; protein ubiquitination. Functionally, component of the Mediator complex, a coactivator involved in the regulated transcription of nearly all RNA polymerase II-dependent genes. Mediator functions as a bridge to convey information from gene-specific regulatory proteins to the basal RNA polymerase II transcription machinery. Mediator is recruited to promoters by direct interactions with regulatory proteins and serves as a scaffold for the assembly of a functional preinitiation complex with RNA polymerase II and the general transcription factors. May play a role as a target recruitment subunit in E3 ubiquitin-protein ligase complexes and thus in ubiquitination and subsequent proteasomal degradation of target proteins. This is Mediator of RNA polymerase II transcription subunit 8 (med8) from Danio rerio (Zebrafish).